Consider the following 653-residue polypeptide: Leucine-rich repeat-containing protein 4 (653 aa).

An N-terminal signal peptide occupies residues Met1–Ala38. The region spanning Ala39 to Ser75 is the LRRNT domain. At Ala39–Lys527 the chain is on the extracellular side. 2 disulfides stabilise this stretch: Cys46–Cys52 and Cys50–Cys61. LRR repeat units follow at residues Asn76–His97, His100–Gly121, Ser124–Tyr145, Lys148–Arg169, Ser172–Gly194, Asn197–Val218, Gly219–Gly240, Ser243–Gly264, and Ser267–Pro288. 9 N-linked (GlcNAc...) asparagine glycosylation sites follow: Asn277, Asn322, Asn363, Asn388, Asn410, Asn434, Asn440, Asn447, and Asn450. In terms of domain architecture, LRRCT spans Asn300–Ala352. 2 cysteine pairs are disulfide-bonded: Cys304–Cys329 and Cys306–Cys350. The 90-residue stretch at Pro353 to Ser442 folds into the Ig-like domain. Cysteines 374 and 424 form a disulfide. A helical transmembrane segment spans residues Ile528 to Tyr548. Residues Lys549–Ile653 lie on the Cytoplasmic side of the membrane.

As to quaternary structure, interacts with DLG4. Interacts (via LRR repeats) with NTNG2. Forms a complex with DLG4 and with NMDA receptors. N-glycosylated. As to expression, specifically expressed in brain.

The protein localises to the membrane. Its subcellular location is the postsynaptic cell membrane. Its function is as follows. Synaptic adhesion protein. Regulates the formation of exitatory synapses through the recruitment of pre-and-postsynaptic proteins. Organize the lamina/pathway-specific differentiation of dendrites. Plays an important role for auditory synaptic responses. Involved in the suppression of glioma. The polypeptide is Leucine-rich repeat-containing protein 4 (LRRC4) (Homo sapiens (Human)).